The sequence spans 38 residues: Small ribosomal subunit protein uS12c (38 aa).

The tract at residues 1–26 is disordered; the sequence is MPTIQQLIRNARQPIENRKKSPALRG.

This sequence belongs to the universal ribosomal protein uS12 family. In terms of assembly, part of the 30S ribosomal subunit.

The protein resides in the plastid. It localises to the chloroplast. Functionally, with S4 and S5 plays an important role in translational accuracy. Located at the interface of the 30S and 50S subunits. This chain is Small ribosomal subunit protein uS12c (rps12), found in Pinus contorta (Shore pine).